Reading from the N-terminus, the 798-residue chain is Cation channel sperm-associated auxiliary subunit delta (798 aa).

The N-terminal stretch at 1 to 20 (MLMLMLVAAVTMWLRPLVTA) is a signal peptide. The Extracellular portion of the chain corresponds to 21–723 (QLCRSRTVRT…AFPVQLVSAG (703 aa)). Intrachain disulfides connect cysteine 23-cysteine 369, cysteine 59-cysteine 145, cysteine 144-cysteine 152, cysteine 387-cysteine 496, cysteine 510-cysteine 701, cysteine 525-cysteine 572, and cysteine 624-cysteine 652. Asparagine 123 carries an N-linked (GlcNAc...) asparagine glycan. Residues asparagine 230, asparagine 240, asparagine 472, asparagine 538, and asparagine 630 are each glycosylated (N-linked (GlcNAc...) asparagine). Residues 724 to 745 (VVILLIISSILGSVWLAYKTPK) traverse the membrane as a helical segment. Over 746-798 (LLRTARGRRIKKCATQLCRRCKTVCQFRASATARAGTEPPGRHRTPHGGRSDH) the chain is Cytoplasmic.

The protein belongs to the CATSPERD family. As to quaternary structure, component of the CatSper complex or CatSpermasome composed of the core pore-forming members CATSPER1, CATSPER2, CATSPER3 and CATSPER4 as well as auxiliary members CATSPERB, CATSPERG, CATSPERD, CATSPERE, CATSPERZ, C2CD6/CATSPERT, TMEM249, TMEM262 and EFCAB9. HSPA1 may be an additional auxiliary complex member. The core complex members CATSPER1, CATSPER2, CATSPER3 and CATSPER4 form a heterotetrameric channel. The auxiliary CATSPERB, CATSPERG, CATSPERD and CATSPERE subunits form a pavilion-like structure over the pore which stabilizes the complex through interactions with CATSPER4, CATSPER3, CATSPER1 and CATSPER2 respectively. TMEM262/CATSPERH interacts with CATSPERB, further stabilizing the complex. C2CD6/CATSPERT interacts at least with CATSPERD and is required for targeting the CatSper complex in the flagellar membrane.

It is found in the cell projection. It localises to the cilium. The protein localises to the flagellum membrane. Functionally, auxiliary component of the CatSper complex, a complex involved in sperm cell hyperactivation. Sperm cell hyperactivation is needed for sperm motility which is essential late in the preparation of sperm for fertilization. Required for CATSPER1 stability before intraflagellar transport and/or incorporation of the CatSper complex channel into the flagellar membrane. The polypeptide is Cation channel sperm-associated auxiliary subunit delta (Homo sapiens (Human)).